A 145-amino-acid chain; its full sequence is Peptide methionine sulfoxide reductase MsrB (145 aa).

One can recognise a MsrB domain in the interval 6 to 129 (EEELKQTLTD…NAAALRFVPV (124 aa)). The Nucleophile role is filled by cysteine 118.

The protein belongs to the MsrB Met sulfoxide reductase family.

The catalysed reaction is L-methionyl-[protein] + [thioredoxin]-disulfide + H2O = L-methionyl-(R)-S-oxide-[protein] + [thioredoxin]-dithiol. This chain is Peptide methionine sulfoxide reductase MsrB, found in Enterococcus faecalis (strain ATCC 700802 / V583).